Reading from the N-terminus, the 324-residue chain is Deoxyhypusine hydroxylase (324 aa).

HEAT-like PBS-type repeat units lie at residues 60-86 (LKHE…VLED) and 94-119 (RHEA…YLHR). Residues H62, E63, H95, and E96 each coordinate Fe cation. Basic and acidic residues predominate over residues 143–152 (EERKQEKLRQ). A disordered region spans residues 143-171 (EERKQEKLRQSDFASVDPAPPMPEDDEKQ). 3 HEAT-like PBS-type repeats span residues 189–219 (KRYR…LAKG), 227–253 (FRHE…ALSN), and 260–287 (VRHE…FLHD). The Fe cation site is built by H229, E230, H262, and E263.

Belongs to the deoxyhypusine hydroxylase family. It depends on Fe(2+) as a cofactor.

It is found in the cytoplasm. The protein localises to the nucleus. It carries out the reaction [eIF5A protein]-deoxyhypusine + AH2 + O2 = [eIF5A protein]-hypusine + A + H2O. The protein operates within protein modification; eIF5A hypusination. Catalyzes the hydroxylation of the N(6)-(4-aminobutyl)-L-lysine intermediate to form hypusine, an essential post-translational modification only found in mature eIF-5A factor. The polypeptide is Deoxyhypusine hydroxylase (lia1) (Neurospora crassa (strain ATCC 24698 / 74-OR23-1A / CBS 708.71 / DSM 1257 / FGSC 987)).